The chain runs to 952 residues: ALS2 C-terminal-like protein (952 aa).

8 MORN repeats span residues 358-380 (YDGE…DGRN), 381-403 (HVGT…QASE), 409-431 (YKCH…TDEV), 432-454 (YKGY…PQAP), 459-481 (YTGH…DRGE), 483-505 (YIGM…AGVC), 506-528 (YQGT…DDSL), and 529-552 (YEGT…NGFT). The 147-residue stretch at 795-941 (LFPDTKLLEF…IQKEDMRPHH (147 aa)) folds into the VPS9 domain.

Homodimer. Forms a heteromeric complex with ALS2. Interacts with ALS2 and RAB5A. Expressed in heart, lung, liver and kidney.

It is found in the cytoplasm. In terms of biological role, acts as a guanine nucleotide exchange factor (GEF) for Rab5 GTPase. Regulates the ALS2-mediated endosome dynamics. The chain is ALS2 C-terminal-like protein (Als2cl) from Mus musculus (Mouse).